A 452-amino-acid chain; its full sequence is Keratin, type I cytoskeletal 42 (452 aa).

A head region spans residues threonine 4–serine 93. Coiled-coil stretches lie at residues serine 93–lysine 132 and asparagine 188–threonine 407. The coil 1A stretch occupies residues glutamate 94–tryptophan 129. Positions glutamate 94–leucine 405 constitute an IF rod domain. Residues tyrosine 130–threonine 147 form a linker 1 region. The segment at isoleucine 148–leucine 239 is coil 1B. Positions arginine 240–isoleucine 262 are linker 12. The segment at leucine 263–glutamate 401 is coil 2. Residues aspartate 402 to histidine 452 form a tail region.

This sequence belongs to the intermediate filament family. Heterodimer of a type I and a type II keratin. Colocalizes with KRT8/KRT18 filament network.

It is found in the cytoplasm. In Rattus norvegicus (Rat), this protein is Keratin, type I cytoskeletal 42.